The sequence spans 253 residues: MSGHNKWANIKHRKMAQDAKKSKIFTKLIREIIVAAREGGGNIETNPRLRAAVERARAENMPKENIERAIKRGTGELEGVDYQEVIYEGYAPGGVAVYIRALTDNKNRTAQELRHLFNKYGGSLAESGSVSWIFERKGVIEISRDKVKDLEELMMIAIDAGAEDIKDAEDPIQIITAPENLSEVKSKLEEAGYEVEAKVTFIPKNTVKVTGKDAEKVLEFLNALEDMDDVQEVYSNFEMDDKEMEEILSRLEG.

Belongs to the TACO1 family.

Its subcellular location is the cytoplasm. The chain is Probable transcriptional regulatory protein TM_0466 from Thermotoga maritima (strain ATCC 43589 / DSM 3109 / JCM 10099 / NBRC 100826 / MSB8).